A 239-amino-acid chain; its full sequence is Probable transcriptional regulatory protein BBR47_14810 (239 aa).

This sequence belongs to the TACO1 family. YeeN subfamily.

The protein localises to the cytoplasm. This Brevibacillus brevis (strain 47 / JCM 6285 / NBRC 100599) protein is Probable transcriptional regulatory protein BBR47_14810.